The following is a 422-amino-acid chain: 5-hydroxytryptamine receptor 1A (422 aa).

Topologically, residues 1-38 (MDVFSFGQGNNTTASQEPFGTGGNVTSISDVTFSYQVI) are extracellular. N-linked (GlcNAc...) asparagine glycosylation is found at Asn10, Asn11, and Asn24. Residues 39-59 (TSLLLGTLIFCAVLGNACVVA) form a helical membrane-spanning segment. Over 60–73 (AIALERSLQNVANY) the chain is Cytoplasmic. Residues 74 to 98 (LIGSLAVTDLMVSVLVLPMAALYQV) traverse the membrane as a helical segment. At 99-107 (LNKWTLGQV) the chain is on the extracellular side. Residues 108-132 (TCDLFIALDVLCCTSSILHLCAIAL) traverse the membrane as a helical segment. Cys109 and Cys187 are joined by a disulfide. Residues Asp116 and Cys120 each coordinate serotonin. Positions 133 to 135 (DRY) match the DRY motif; important for ligand-induced conformation changes motif. Topologically, residues 133 to 152 (DRYWAITDPIDYVNKRTPRR) are cytoplasmic. A helical transmembrane segment spans residues 153–174 (AAALISLTWLIGFLISIPPMLG). Residues 175-193 (WRTPEDRSDPDACTISKDH) are Extracellular-facing. A helical membrane pass occupies residues 194 to 216 (GYTIYSTFGAFYIPLLLMLVLYG). At 217–346 (RIFRAARFRI…LARERKTVKT (130 aa)) the chain is on the cytoplasmic side. The disordered stretch occupies residues 235–261 (KKGAGTSLGTSSAPPPKKSLNGQPGSG). 3 residues coordinate 1D-myo-inositol 4-phosphate: Lys345, Thr346, and Gly352. The helical transmembrane segment at 347-370 (LGIIMGTFILCWLPFFIVALVLPF) threads the bilayer. At 371–378 (CESSCHMP) the chain is on the extracellular side. Residues 379 to 403 (ALLGAIINWLGYSNSLLNPVIYAYF) traverse the membrane as a helical segment. Positions 396 to 400 (NPVIY) match the NPxxY motif; important for ligand-induced conformation changes and signaling motif. 3 residues coordinate 1D-myo-inositol 4-phosphate: Phe403, Asn404, and Lys405. At 404–422 (NKDFQNAFKKIIKCKFCRR) the chain is on the cytoplasmic side.

The protein belongs to the G-protein coupled receptor 1 family. 5-hydroxytryptamine receptor subfamily. HTR1A sub-subfamily. As to quaternary structure, heterodimer; heterodimerizes with GPER1. Interacts with YIF1B. Interacts with GPR39 and GALR1. As to expression, detected in hypothalamus, mesencephalon, amygdala, medulla, thalamus, septum and hippocampus.

The protein localises to the cell membrane. It localises to the cell projection. Its subcellular location is the dendrite. Its activity is regulated as follows. G-protein coupled receptor activity is regulated by lipids: phosphatidylinositol 4-phosphate increases HTR1A-mediated activity. G-protein coupled receptor for 5-hydroxytryptamine (serotonin). Also functions as a receptor for various drugs and psychoactive substances. Ligand binding causes a conformation change that triggers signaling via guanine nucleotide-binding proteins (G proteins) and modulates the activity of downstream effectors, such as adenylate cyclase. HTR1A is coupled to G(i)/G(o) G alpha proteins and mediates inhibitory neurotransmission: signaling inhibits adenylate cyclase activity and activates a phosphatidylinositol-calcium second messenger system that regulates the release of Ca(2+) ions from intracellular stores. Beta-arrestin family members regulate signaling by mediating both receptor desensitization and resensitization processes. The sequence is that of 5-hydroxytryptamine receptor 1A from Rattus norvegicus (Rat).